Reading from the N-terminus, the 314-residue chain is Homoserine kinase (314 aa).

96–106 (PIGSGLGSSAC) contacts ATP.

It belongs to the GHMP kinase family. Homoserine kinase subfamily.

The protein resides in the cytoplasm. The enzyme catalyses L-homoserine + ATP = O-phospho-L-homoserine + ADP + H(+). It participates in amino-acid biosynthesis; L-threonine biosynthesis; L-threonine from L-aspartate: step 4/5. Catalyzes the ATP-dependent phosphorylation of L-homoserine to L-homoserine phosphate. This chain is Homoserine kinase, found in Haemophilus influenzae (strain PittEE).